The sequence spans 570 residues: uncharacterized protein (570 aa).

A compositionally biased stretch (low complexity) spans M1–S15. Residues M1 to E34 form a disordered region. Position 14 is a phosphoserine (S14). The next 12 membrane-spanning stretches (helical) occupy residues W96 to G116, N141 to M161, T163 to L183, F198 to F218, P229 to L249, L261 to Y281, P328 to Y348, V369 to I389, A397 to S417, L423 to T443, G457 to S477, and P485 to A505.

The protein belongs to the major facilitator superfamily. Allantoate permease family.

The protein resides in the endoplasmic reticulum. It is found in the membrane. This is an uncharacterized protein from Schizosaccharomyces pombe (strain 972 / ATCC 24843) (Fission yeast).